We begin with the raw amino-acid sequence, 238 residues long: tRNA (guanine-N(7)-)-methyltransferase (238 aa).

S-adenosyl-L-methionine is bound by residues Glu-70, Asp-95, Asp-122, and Asp-145. The active site involves Asp-145. Residues Lys-149, Asp-181, and 216-219 (TKFE) contribute to the substrate site.

Belongs to the class I-like SAM-binding methyltransferase superfamily. TrmB family.

The catalysed reaction is guanosine(46) in tRNA + S-adenosyl-L-methionine = N(7)-methylguanosine(46) in tRNA + S-adenosyl-L-homocysteine. The protein operates within tRNA modification; N(7)-methylguanine-tRNA biosynthesis. Its function is as follows. Catalyzes the formation of N(7)-methylguanine at position 46 (m7G46) in tRNA. The sequence is that of tRNA (guanine-N(7)-)-methyltransferase from Neisseria meningitidis serogroup A / serotype 4A (strain DSM 15465 / Z2491).